Consider the following 952-residue polypeptide: Serine/threonine-protein kinase atg1 (952 aa).

The Protein kinase domain occupies 23-329 (FTINEQIGKG…FPEYFAHPVV (307 aa)). Residues 29 to 37 (IGKGSFATV) and K52 contribute to the ATP site. D166 (proton acceptor) is an active-site residue. Disordered regions lie at residues 331-478 (EPIP…EAEQ), 510-573 (GRAN…SSPS), 783-806 (RLPEDHPGHPNNRSTASRLVGGSS), and 920-952 (AIAKHQSMPPPSSSPRRSYSGGTTPTINNTPPK). Basic and acidic residues-rich tracts occupy residues 338–347 (GDDRPKEKSP) and 356–372 (SLRDRQRESPTVKHIDT). Over residues 386-398 (SPRTPNIESNQPF) the composition is skewed to polar residues. The span at 429 to 439 (PRQRDRKDRTE) shows a compositional bias: basic and acidic residues. 3 stretches are compositionally biased toward polar residues: residues 459–475 (ANLQPKNEVQSSNSITE), 553–573 (PDTSSARNSYGSYGKTGSSPS), and 793–806 (NNRSTASRLVGGSS). Positions 933 to 952 (SPRRSYSGGTTPTINNTPPK) are enriched in low complexity.

It belongs to the protein kinase superfamily. Ser/Thr protein kinase family. APG1/unc-51/ULK1 subfamily. Homodimer. Forms a ternary complex with ATG13 and ATG17.

It localises to the cytoplasm. The protein resides in the preautophagosomal structure membrane. The catalysed reaction is L-seryl-[protein] + ATP = O-phospho-L-seryl-[protein] + ADP + H(+). It catalyses the reaction L-threonyl-[protein] + ATP = O-phospho-L-threonyl-[protein] + ADP + H(+). Its function is as follows. Serine/threonine protein kinase involved in the cytoplasm to vacuole transport (Cvt) and found to be essential in autophagy, where it is required for the formation of autophagosomes. Involved in the clearance of protein aggregates which cannot be efficiently cleared by the proteasome. Required for selective autophagic degradation of the nucleus (nucleophagy) as well as for mitophagy which contributes to regulate mitochondrial quantity and quality by eliminating the mitochondria to a basal level to fulfill cellular energy requirements and preventing excess ROS production. Also involved in endoplasmic reticulum-specific autophagic process, in selective removal of ER-associated degradation (ERAD) substrates. Plays a key role in ATG9 and ATG23 cycling through the pre-autophagosomal structure and is necessary to promote ATG18 binding to ATG9 through phosphorylation of ATG9. Catalyzes phosphorylation of ATG4, decreasing the interaction between ATG4 and ATG8 and impairing deconjugation of PE-conjugated forms of ATG8. This chain is Serine/threonine-protein kinase atg1, found in Botryotinia fuckeliana (strain B05.10) (Noble rot fungus).